The chain runs to 269 residues: Formamidopyrimidine-DNA glycosylase (269 aa).

Pro2 functions as the Schiff-base intermediate with DNA in the catalytic mechanism. Glu3 acts as the Proton donor in catalysis. Lys57 functions as the Proton donor; for beta-elimination activity in the catalytic mechanism. His90, Arg109, and Lys150 together coordinate DNA. An FPG-type zinc finger spans residues 235–269 (QVYGKGGKPCPRCDNPLSEMKIGQRASVFCSECQK). Arg259 (proton donor; for delta-elimination activity) is an active-site residue.

This sequence belongs to the FPG family. Monomer. It depends on Zn(2+) as a cofactor.

It catalyses the reaction Hydrolysis of DNA containing ring-opened 7-methylguanine residues, releasing 2,6-diamino-4-hydroxy-5-(N-methyl)formamidopyrimidine.. The catalysed reaction is 2'-deoxyribonucleotide-(2'-deoxyribose 5'-phosphate)-2'-deoxyribonucleotide-DNA = a 3'-end 2'-deoxyribonucleotide-(2,3-dehydro-2,3-deoxyribose 5'-phosphate)-DNA + a 5'-end 5'-phospho-2'-deoxyribonucleoside-DNA + H(+). Functionally, involved in base excision repair of DNA damaged by oxidation or by mutagenic agents. Acts as a DNA glycosylase that recognizes and removes damaged bases. Has a preference for oxidized purines, such as 7,8-dihydro-8-oxoguanine (8-oxoG). Has AP (apurinic/apyrimidinic) lyase activity and introduces nicks in the DNA strand. Cleaves the DNA backbone by beta-delta elimination to generate a single-strand break at the site of the removed base with both 3'- and 5'-phosphates. This is Formamidopyrimidine-DNA glycosylase from Photobacterium profundum (strain SS9).